We begin with the raw amino-acid sequence, 362 residues long: UDP-N-acetylglucosamine--N-acetylmuramyl-(pentapeptide) pyrophosphoryl-undecaprenol N-acetylglucosamine transferase (362 aa).

Residues 11–13 (TGG), N124, R163, S191, I246, and Q291 each bind UDP-N-acetyl-alpha-D-glucosamine.

This sequence belongs to the glycosyltransferase 28 family. MurG subfamily.

Its subcellular location is the cell inner membrane. The enzyme catalyses di-trans,octa-cis-undecaprenyl diphospho-N-acetyl-alpha-D-muramoyl-L-alanyl-D-glutamyl-meso-2,6-diaminopimeloyl-D-alanyl-D-alanine + UDP-N-acetyl-alpha-D-glucosamine = di-trans,octa-cis-undecaprenyl diphospho-[N-acetyl-alpha-D-glucosaminyl-(1-&gt;4)]-N-acetyl-alpha-D-muramoyl-L-alanyl-D-glutamyl-meso-2,6-diaminopimeloyl-D-alanyl-D-alanine + UDP + H(+). The protein operates within cell wall biogenesis; peptidoglycan biosynthesis. Functionally, cell wall formation. Catalyzes the transfer of a GlcNAc subunit on undecaprenyl-pyrophosphoryl-MurNAc-pentapeptide (lipid intermediate I) to form undecaprenyl-pyrophosphoryl-MurNAc-(pentapeptide)GlcNAc (lipid intermediate II). The protein is UDP-N-acetylglucosamine--N-acetylmuramyl-(pentapeptide) pyrophosphoryl-undecaprenol N-acetylglucosamine transferase of Idiomarina loihiensis (strain ATCC BAA-735 / DSM 15497 / L2-TR).